Reading from the N-terminus, the 397-residue chain is 1-deoxy-D-xylulose 5-phosphate reductoisomerase (397 aa).

NADPH contacts are provided by Thr10, Gly11, Ser12, Ile13, Asn38, and Asn125. Lys126 contacts 1-deoxy-D-xylulose 5-phosphate. Glu127 is an NADPH binding site. Residue Asp151 participates in Mn(2+) binding. 1-deoxy-D-xylulose 5-phosphate contacts are provided by Ser152, Glu153, Ser187, and His210. Residue Glu153 coordinates Mn(2+). Residue Gly216 coordinates NADPH. 1-deoxy-D-xylulose 5-phosphate is bound by residues Ser223, Asn228, Lys229, and Glu232. Residue Glu232 participates in Mn(2+) binding.

This sequence belongs to the DXR family. In terms of assembly, homodimer. It depends on Mg(2+) as a cofactor. Mn(2+) serves as cofactor.

The catalysed reaction is 2-C-methyl-D-erythritol 4-phosphate + NADP(+) = 1-deoxy-D-xylulose 5-phosphate + NADPH + H(+). It functions in the pathway isoprenoid biosynthesis; isopentenyl diphosphate biosynthesis via DXP pathway; isopentenyl diphosphate from 1-deoxy-D-xylulose 5-phosphate: step 1/6. Its function is as follows. Catalyzes the NADPH-dependent rearrangement and reduction of 1-deoxy-D-xylulose-5-phosphate (DXP) to 2-C-methyl-D-erythritol 4-phosphate (MEP). In Blochmanniella pennsylvanica (strain BPEN), this protein is 1-deoxy-D-xylulose 5-phosphate reductoisomerase.